Reading from the N-terminus, the 529-residue chain is Peptide chain release factor 3 (529 aa).

Residues 11-280 (AKRRTFAIIS…GLVEWAPAPM (270 aa)) enclose the tr-type G domain. Residues 20–27 (SHPDAGKT), 88–92 (DTPGH), and 142–145 (NKLD) each bind GTP.

This sequence belongs to the TRAFAC class translation factor GTPase superfamily. Classic translation factor GTPase family. PrfC subfamily.

It is found in the cytoplasm. Functionally, increases the formation of ribosomal termination complexes and stimulates activities of RF-1 and RF-2. It binds guanine nucleotides and has strong preference for UGA stop codons. It may interact directly with the ribosome. The stimulation of RF-1 and RF-2 is significantly reduced by GTP and GDP, but not by GMP. The sequence is that of Peptide chain release factor 3 from Yersinia pestis bv. Antiqua (strain Antiqua).